A 634-amino-acid chain; its full sequence is Chaperone protein HtpG (634 aa).

The a; substrate-binding stretch occupies residues 1–342; the sequence is MTVETDKQTL…SSDLSLNVSR (342 aa). The segment at 343–559 is b; sequence EILQSGPVVD…QGDLGLQMRQ (217 aa). The c stretch occupies residues 560–634; sequence LLEASGQAVP…LNKLLLELSA (75 aa).

It belongs to the heat shock protein 90 family. As to quaternary structure, homodimer.

Its subcellular location is the cytoplasm. Its function is as follows. Molecular chaperone. Has ATPase activity. The chain is Chaperone protein HtpG from Xanthomonas axonopodis pv. citri (strain 306).